A 147-amino-acid polypeptide reads, in one-letter code: Large ribosomal subunit protein uL15 (147 aa).

The segment at 1-54 is disordered; that stretch reads MRLSDIKPTPGSMKKRTRVGRGIGSGKGKTSGKGHKGQKARGRGKVHPWFEGGQ. A compositionally biased stretch (basic residues) spans 30–46; the sequence is TSGKGHKGQKARGRGKV.

The protein belongs to the universal ribosomal protein uL15 family. Part of the 50S ribosomal subunit.

Its function is as follows. Binds to the 23S rRNA. The polypeptide is Large ribosomal subunit protein uL15 (Thermosipho melanesiensis (strain DSM 12029 / CIP 104789 / BI429)).